Reading from the N-terminus, the 239-residue chain is Fatty acid metabolism regulator protein (239 aa).

An HTH gntR-type domain is found at 6–74; the sequence is QSPAGFAEEY…HGKPTKVNNF (69 aa). The segment at residues 34-53 is a DNA-binding region (H-T-H motif); that stretch reads ERELSELIGVTRTTLREVLQ.

As to quaternary structure, homodimer.

It is found in the cytoplasm. Its function is as follows. Multifunctional regulator of fatty acid metabolism. In Cronobacter sakazakii (strain ATCC BAA-894) (Enterobacter sakazakii), this protein is Fatty acid metabolism regulator protein.